The chain runs to 367 residues: Terpene cyclase verU1 (367 aa).

Residues 8–28 (IRCSLLLLGLVGIYTVWISSF) form a helical membrane-spanning segment. The N-linked (GlcNAc...) asparagine glycan is linked to N50. Helical transmembrane passes span 57–77 (FTGIDTLDKALGIFVVFYWPV), 85–105 (LSLIAFPAAVGVGEMWILFAL), 120–140 (MAMFGMGLMLVGPGIFLPIYC), 169–189 (CLLGGYYILVILLALPSPAVV), 197–217 (IIALLQGWPLLVSAMLWLTHL), 239–259 (ISAMACATISHLVPLLISLLA), 292–312 (FQWDYGLGSLALLLWAVGLHI), and 327–347 (LIPEALFLSVMMSPCGAAALY). The N-linked (GlcNAc...) asparagine glycan is linked to N352.

This sequence belongs to the membrane-bound ascI terpene cyclase family.

It is found in the membrane. Its pathway is secondary metabolite biosynthesis; terpenoid biosynthesis. The protein operates within mycotoxin biosynthesis. Functionally, terpene cyclase; part of the gene cluster that mediates the biosynthesis of the neurotoxin verrucosidin, a methylated alpha-pyrone polyketide that inhibits oxidative phosphorylation in mitochondria and thereby causes neurological diseases. The carbon backbone of verrucosidin is synthesized by the HR-PKS verA, and further modified by the other verrucodidin cluster enzymes. This Penicillium polonicum protein is Terpene cyclase verU1.